A 262-amino-acid chain; its full sequence is Dihydroorotate dehydrogenase B (NAD(+)), electron transfer subunit (262 aa).

Residues Ser-2 to Leu-102 enclose the FAD-binding FR-type domain. Residues Arg-53–Ser-56, Leu-70–Arg-72, and Gly-77–Thr-78 each bind FAD. 4 residues coordinate [2Fe-2S] cluster: Cys-224, Cys-229, Cys-232, and Cys-248.

It belongs to the PyrK family. As to quaternary structure, heterotetramer of 2 PyrK and 2 PyrD type B subunits. However, the metal reductase complex seems to be composed of a heterooctamer of 4 PyrK and 4 PyrD subunits. It depends on FAD as a cofactor. [2Fe-2S] cluster serves as cofactor.

The protein localises to the cytoplasm. It functions in the pathway pyrimidine metabolism; UMP biosynthesis via de novo pathway; orotate from (S)-dihydroorotate (NAD(+) route): step 1/1. In terms of biological role, responsible for channeling the electrons from the oxidation of dihydroorotate from the FMN redox center in the PyrD type B subunit to the ultimate electron acceptor NAD(+). Its function is as follows. Together with PyrD, also forms a metal reductase complex able to reduce Fe(III)-chelates to Fe(II)-chelates, as well as soluble Cr(VI) and U(VI), using NADH as electron donor. To a lesser extent, can also use NADPH as an electron donor. Is unable to reduce riboflavin and FMN with NADH as electron donor. May have an in vivo role in metal reduction in D.reducens, which is an organism capable of reducing contaminant heavy metals and radionuclides. This Desulforamulus reducens (strain ATCC BAA-1160 / DSM 100696 / MI-1) (Desulfotomaculum reducens) protein is Dihydroorotate dehydrogenase B (NAD(+)), electron transfer subunit.